The sequence spans 199 residues: Probable GTP-binding protein EngB (199 aa).

In terms of domain architecture, EngB-type G spans 28–199; that stretch reads DLPEIALAGR…DSWDAILEQV (172 aa). GTP is bound by residues 36–43, 63–67, 81–84, 148–151, and 180–182; these read GRSNVGKS, GKTQL, DVPG, TKAD, and FSS. S43 and T65 together coordinate Mg(2+).

This sequence belongs to the TRAFAC class TrmE-Era-EngA-EngB-Septin-like GTPase superfamily. EngB GTPase family. Mg(2+) is required as a cofactor.

Necessary for normal cell division and for the maintenance of normal septation. This Streptococcus pyogenes serotype M6 (strain ATCC BAA-946 / MGAS10394) protein is Probable GTP-binding protein EngB.